The chain runs to 472 residues: Sarcalumenin (472 aa).

Positions 1-19 are cleaved as a signal peptide; that stretch reads MRALLLFCFVASLLLSGQA. The 242-residue stretch at 89-330 folds into the Dynamin-type G domain; it reads ITSKPMVLFL…IENRLENKIA (242 aa). Residues 99–106 form a G1 motif region; it reads GPWSVGKS. Serine 102 is a glycosylation site (N-linked (GlcNAc...) asparagine). The interval 127–128 is G2 motif; it reads EP. The segment at 189 to 192 is G3 motif; that stretch reads DTPG. Residues 254–257 form a G4 motif region; that stretch reads NKAD. Proline 277 is a region of interest (G5 motif). Residues asparagine 280 and asparagine 388 are each glycosylated (N-linked (GlcNAc...) asparagine).

The protein belongs to the TRAFAC class dynamin-like GTPase superfamily. Dynamin/Fzo/YdjA family. Post-translationally, N-glycosylated. Detected in skeletal muscle.

The protein resides in the sarcoplasmic reticulum lumen. The protein localises to the sarcoplasmic reticulum membrane. This Oryctolagus cuniculus (Rabbit) protein is Sarcalumenin (SRL).